The following is an 82-amino-acid chain: Host transcription reprogramming factor 10 (82 aa).

A signal peptide spans 1–19 (MQIFNMVSLVALFALGATA). The C2H2-type zinc-finger motif lies at 57–81 (WVCHACNKQFTTPAALQKHKDTVVH).

It is found in the secreted. The protein localises to the host nucleus. Functionally, probable secreted effector that translocates into the nuclei of host cells to reprogram the expression of targeted genes by binding on effector binding elements in rice. The chain is Host transcription reprogramming factor 10 from Pyricularia oryzae (strain 70-15 / ATCC MYA-4617 / FGSC 8958) (Rice blast fungus).